The sequence spans 162 residues: MDLEIYDKTQDGVPAEHVNLIQDVLQYAGKYLKLADNTEMSVTLMNNEDIHRINQQYRGVDRATDVISFAIEDDDEEAADFPLVMDDELAAEIPENIGDIFVSMDKVAEQADYLGHSYERELGFLVVHGFLHLNGYDHMEPEDEKVMFKLQADILDAYGLKR.

Zn(2+) is bound by residues His128, His132, and His138.

It belongs to the endoribonuclease YbeY family. Zn(2+) serves as cofactor.

Its subcellular location is the cytoplasm. Single strand-specific metallo-endoribonuclease involved in late-stage 70S ribosome quality control and in maturation of the 3' terminus of the 16S rRNA. This Levilactobacillus brevis (strain ATCC 367 / BCRC 12310 / CIP 105137 / JCM 1170 / LMG 11437 / NCIMB 947 / NCTC 947) (Lactobacillus brevis) protein is Endoribonuclease YbeY.